The chain runs to 104 residues: Large ribosomal subunit protein bL21 (104 aa).

It belongs to the bacterial ribosomal protein bL21 family. As to quaternary structure, part of the 50S ribosomal subunit. Contacts protein L20.

Functionally, this protein binds to 23S rRNA in the presence of protein L20. The sequence is that of Large ribosomal subunit protein bL21 from Francisella tularensis subsp. tularensis (strain FSC 198).